The chain runs to 139 residues: Large ribosomal subunit protein uL16 (139 aa).

Belongs to the universal ribosomal protein uL16 family. In terms of assembly, part of the 50S ribosomal subunit.

Functionally, binds 23S rRNA and is also seen to make contacts with the A and possibly P site tRNAs. This is Large ribosomal subunit protein uL16 (rplP) from Neorickettsia sennetsu (strain ATCC VR-367 / Miyayama) (Ehrlichia sennetsu).